Reading from the N-terminus, the 289-residue chain is Shikimate dehydrogenase (NADP(+)) (289 aa).

Shikimate is bound by residues 22-24 (SRS) and Thr69. Lys73 (proton acceptor) is an active-site residue. NADP(+) is bound at residue Glu85. Shikimate-binding residues include Asn94 and Asp109. NADP(+)-binding positions include 134–138 (GAGGA), 158–163 (NRTLSR), and Ile226. Tyr228 is a binding site for shikimate. Gly249 is a binding site for NADP(+).

It belongs to the shikimate dehydrogenase family. As to quaternary structure, homodimer.

It catalyses the reaction shikimate + NADP(+) = 3-dehydroshikimate + NADPH + H(+). It functions in the pathway metabolic intermediate biosynthesis; chorismate biosynthesis; chorismate from D-erythrose 4-phosphate and phosphoenolpyruvate: step 4/7. Its function is as follows. Involved in the biosynthesis of the chorismate, which leads to the biosynthesis of aromatic amino acids. Catalyzes the reversible NADPH linked reduction of 3-dehydroshikimate (DHSA) to yield shikimate (SA). The polypeptide is Shikimate dehydrogenase (NADP(+)) (Brucella melitensis biotype 2 (strain ATCC 23457)).